A 311-amino-acid chain; its full sequence is tRNA-cytidine(32) 2-sulfurtransferase (311 aa).

The PP-loop motif motif lies at 47–52; it reads SGGKDS. Residues C122, C125, and C213 each coordinate [4Fe-4S] cluster.

The protein belongs to the TtcA family. As to quaternary structure, homodimer. The cofactor is Mg(2+). [4Fe-4S] cluster is required as a cofactor.

It is found in the cytoplasm. The enzyme catalyses cytidine(32) in tRNA + S-sulfanyl-L-cysteinyl-[cysteine desulfurase] + AH2 + ATP = 2-thiocytidine(32) in tRNA + L-cysteinyl-[cysteine desulfurase] + A + AMP + diphosphate + H(+). It participates in tRNA modification. Catalyzes the ATP-dependent 2-thiolation of cytidine in position 32 of tRNA, to form 2-thiocytidine (s(2)C32). The sulfur atoms are provided by the cysteine/cysteine desulfurase (IscS) system. In Escherichia coli O45:K1 (strain S88 / ExPEC), this protein is tRNA-cytidine(32) 2-sulfurtransferase.